The chain runs to 140 residues: Perlin matrix protein (140 aa).

An N-terminal signal peptide occupies residues 1 to 26; sequence MTCTLRLTVAALVLLGICHLSRPVAA.

Belongs to the N16 matrix protein family. As to quaternary structure, heterooligomer; disulfide-linked. Pif97, Pif80, N16 and other proteins form a complex. As to expression, component of conchiolin, the organic matrix of nacre. Only expressed in the dorsal region of the mantle.

The protein resides in the secreted. Its subcellular location is the extracellular space. It is found in the extracellular matrix. Its function is as follows. May be specifically involved in the formation of the nacreous layer. In Margaritifera margaritifera (Freshwater pearl mussel), this protein is Perlin matrix protein.